Reading from the N-terminus, the 156-residue chain is uncharacterized protein (156 aa).

It belongs to the mimivirus L223/L227/L812 family.

This is an uncharacterized protein from Acanthamoeba polyphaga mimivirus (APMV).